A 204-amino-acid polypeptide reads, in one-letter code: Pyrrolidone-carboxylate peptidase (204 aa).

Catalysis depends on residues Glu-78, Cys-141, and His-165.

It belongs to the peptidase C15 family. As to quaternary structure, homotetramer.

It is found in the cytoplasm. The catalysed reaction is Release of an N-terminal pyroglutamyl group from a polypeptide, the second amino acid generally not being Pro.. Functionally, removes 5-oxoproline from various penultimate amino acid residues except L-proline. This Levilactobacillus brevis (strain ATCC 367 / BCRC 12310 / CIP 105137 / JCM 1170 / LMG 11437 / NCIMB 947 / NCTC 947) (Lactobacillus brevis) protein is Pyrrolidone-carboxylate peptidase.